The following is a 125-amino-acid chain: Large ribosomal subunit protein mL51 (125 aa).

A mitochondrion-targeting transit peptide spans 1–29; that stretch reads MWSVQQLLWGCRSLLTQGCRSFSLGSRDL.

The protein belongs to the mitochondrion-specific ribosomal protein mL51 family. As to quaternary structure, component of the mitochondrial ribosome large subunit (39S) which comprises a 16S rRNA and about 50 distinct proteins.

It is found in the mitochondrion. This chain is Large ribosomal subunit protein mL51 (mrpl51), found in Xenopus tropicalis (Western clawed frog).